The primary structure comprises 430 residues: uncharacterized protein (430 aa).

The next 12 helical transmembrane spans lie at 18–38 (LFLL…NTFV), 49–69 (FIDL…TFYL), 80–100 (VFIL…VLLA), 109–129 (VLIG…FNVL), 145–165 (FMGI…GFVI), 175–195 (TVIF…SFFL), 235–255 (IFVF…LALG), 256–276 (TFGL…SRLI), 285–305 (ILLG…HMSF), 307–327 (TLLT…VPYV), 353–373 (MFLN…VALL), and 377–397 (VGIP…YYFV). A disordered region spans residues 407–430 (GENETMEEDGQKRVTEPTLLKGER). Over residues 415-430 (DGQKRVTEPTLLKGER) the composition is skewed to basic and acidic residues.

It is found in the cell membrane. This is an uncharacterized protein from Bacillus subtilis (strain 168).